The chain runs to 178 residues: ATP-dependent protease subunit HslV (178 aa).

Thr7 is an active-site residue. Positions 162, 165, and 168 each coordinate Na(+).

The protein belongs to the peptidase T1B family. HslV subfamily. As to quaternary structure, a double ring-shaped homohexamer of HslV is capped on each side by a ring-shaped HslU homohexamer. The assembly of the HslU/HslV complex is dependent on binding of ATP.

Its subcellular location is the cytoplasm. The enzyme catalyses ATP-dependent cleavage of peptide bonds with broad specificity.. Allosterically activated by HslU binding. Functionally, protease subunit of a proteasome-like degradation complex believed to be a general protein degrading machinery. This is ATP-dependent protease subunit HslV from Sulfurihydrogenibium sp. (strain YO3AOP1).